The sequence spans 730 residues: Envelope glycoprotein H (730 aa).

Positions 1–21 (MQGLAFLAALACWRCISLTCG) are cleaved as a signal peptide. Residues 22–706 (ATGALPTTAT…MYRRRAASAL (685 aa)) are Virion surface-facing. 15 N-linked (GlcNAc...) asparagine; by host glycosylation sites follow: asparagine 46, asparagine 54, asparagine 101, asparagine 125, asparagine 131, asparagine 188, asparagine 209, asparagine 215, asparagine 267, asparagine 274, asparagine 365, asparagine 556, asparagine 613, asparagine 626, and asparagine 688. The tract at residues 190–254 (SGVALYGVVS…RNAKYALVAI (65 aa)) is interaction with gL. A helical transmembrane segment spans residues 707-727 (FLILSFIGFSGVIYFLYRLFS). Residues 728–730 (ILY) are Intravirion-facing.

It belongs to the herpesviridae glycoprotein H family. In terms of assembly, interacts with glycoprotein L (gL); this interaction is necessary for the correct processing and cell surface expression of gH. The heterodimer gH/gL seems to interact with gB trimers during fusion. When in complex with gL, interacts with host EPHA2; this interaction triggers EPHA2 phosphorylation and endocytosis allowing KSHV entry. Post-translationally, N-glycosylated, O-glycosylated, and sialylated.

The protein localises to the virion membrane. The protein resides in the host cell membrane. Its subcellular location is the host endosome membrane. The heterodimer glycoprotein H-glycoprotein L is required for the fusion of viral and plasma membranes leading to virus entry into the host cell. Following initial binding to host receptor, membrane fusion is mediated by the fusion machinery composed of gB and the heterodimer gH/gL. May also be involved in the fusion between the virion envelope and the outer nuclear membrane during virion morphogenesis. Targets host EPHA2 to promote KSHV entry. This chain is Envelope glycoprotein H, found in Homo sapiens (Human).